A 251-amino-acid chain; its full sequence is D-aminoacyl-tRNA deacylase (251 aa).

Belongs to the DtdA deacylase family. Monomer. The cofactor is Zn(2+).

It carries out the reaction a D-aminoacyl-tRNA + H2O = a tRNA + a D-alpha-amino acid + H(+). The enzyme catalyses glycyl-tRNA(Ala) + H2O = tRNA(Ala) + glycine + H(+). In terms of biological role, D-aminoacyl-tRNA deacylase with broad substrate specificity. By recycling D-aminoacyl-tRNA to D-amino acids and free tRNA molecules, this enzyme counteracts the toxicity associated with the formation of D-aminoacyl-tRNA entities in vivo. This chain is D-aminoacyl-tRNA deacylase, found in Pyrobaculum aerophilum (strain ATCC 51768 / DSM 7523 / JCM 9630 / CIP 104966 / NBRC 100827 / IM2).